The sequence spans 483 residues: Glutamyl-tRNA(Gln) amidotransferase subunit A (483 aa).

Active-site charge relay system residues include K77 and S152. The Acyl-ester intermediate role is filled by S176.

It belongs to the amidase family. GatA subfamily. As to quaternary structure, heterotrimer of A, B and C subunits.

The enzyme catalyses L-glutamyl-tRNA(Gln) + L-glutamine + ATP + H2O = L-glutaminyl-tRNA(Gln) + L-glutamate + ADP + phosphate + H(+). Its function is as follows. Allows the formation of correctly charged Gln-tRNA(Gln) through the transamidation of misacylated Glu-tRNA(Gln) in organisms which lack glutaminyl-tRNA synthetase. The reaction takes place in the presence of glutamine and ATP through an activated gamma-phospho-Glu-tRNA(Gln). In Listeria monocytogenes serotype 4b (strain CLIP80459), this protein is Glutamyl-tRNA(Gln) amidotransferase subunit A.